Consider the following 348-residue polypeptide: Heptaprenyl diphosphate synthase component 2 (348 aa).

Isopentenyl diphosphate contacts are provided by K73, R76, and H105. D112 and D116 together coordinate Mg(2+). An all-trans-hexaprenyl diphosphate-binding site is contributed by R121. R122 provides a ligand contact to isopentenyl diphosphate. 3 residues coordinate all-trans-hexaprenyl diphosphate: K198, T199, and Q236.

This sequence belongs to the FPP/GGPP synthase family. In terms of assembly, heterodimer of component I and II. Mg(2+) is required as a cofactor.

The catalysed reaction is 4 isopentenyl diphosphate + (2E,6E)-farnesyl diphosphate = all-trans-heptaprenyl diphosphate + 4 diphosphate. Functionally, supplies heptaprenyl diphosphate, the precursor for the side chain of the isoprenoid quinone menaquinone-7 (MQ-7). The sequence is that of Heptaprenyl diphosphate synthase component 2 (hepT) from Bacillus subtilis (strain 168).